Reading from the N-terminus, the 850-residue chain is Protein argonaute 8 (850 aa).

The disordered stretch occupies residues 1–30 (MDTTLPPPQHMEREPLKSKSSLLPMTRRGN). Positions 247–361 (PVVDFLIANQ…FPIELCELVS (115 aa)) constitute a PAZ domain. Residues 518–811 (QSILGEVPPK…AAAQMATAMK (294 aa)) enclose the Piwi domain.

This sequence belongs to the argonaute family. Ago subfamily.

Functionally, involved in RNA-mediated post-transcriptional gene silencing (PTGS). Main component of the RNA-induced silencing complex (RISC) that binds to a short guide RNA such as a microRNA (miRNA) or small interfering RNA (siRNA). RISC uses the mature miRNA or siRNA as a guide for slicer-directed cleavage of homologous mRNAs to repress gene expression. This Arabidopsis thaliana (Mouse-ear cress) protein is Protein argonaute 8 (AGO8).